The following is a 541-amino-acid chain: Beta-hexosaminidase 1 (541 aa).

An N-terminal signal peptide occupies residues 1 to 20 (MSTNLLRLILLFITLSITSS). 2 N-linked (GlcNAc...) asparagine glycosylation sites follow: Asn44 and Asn304. An intrachain disulfide couples Cys295 to Cys337. Glu332 (proton donor) is an active-site residue. N-linked (GlcNAc...) asparagine glycosylation is found at Asn340, Asn352, and Asn497. Residues Cys511 and Cys538 are joined by a disulfide bond.

Belongs to the glycosyl hydrolase 20 family. N-glycosylated. As to expression, expressed in roots, leaves, stems, flowers and siliques.

Its subcellular location is the vacuole. The catalysed reaction is Hydrolysis of terminal non-reducing N-acetyl-D-hexosamine residues in N-acetyl-beta-D-hexosaminides.. Its activity is regulated as follows. Inhibited by N-acetylcastanospermine, 2-acet-amido-1,2-dideoxynojirimycin and PUGNAc. Its function is as follows. Has a broad substrate specificity. Can use synthetic substrates such as pyridylaminated chitotriose, pyridylaminated chitobiose, p-nitrophenyl-beta-N-acetylglucosaminide, p-nitrophenyl-2-acetamido-2-deoxy-beta-D-glucopyranoside (pNP-GlcNAc), p-nitrophenyl-2-acetamido-2-deoxy-beta-D-galactopyranoside (pNP-GalNAc), 4-methylumbelliferyl-2-acetamido-2-deoxy-beta-D-glucopyranoside (MU-GlcNAc), and 4-methylumbelliferyl-6-sulfo-2-acetamido-2-deoxy-beta-D-glucopyranoside (MU-GlcNAc-6SO(4)) as substrates. Removes terminal GlcNAc residues from alpha1,3- and alpha1,6-mannosyl branches of biantennary N-glycans without any strict branch preference. Required for the presence of paucimannosidic N-glycans in glycoproteins of roots and, to a lower extent, of leaves. In Arabidopsis thaliana (Mouse-ear cress), this protein is Beta-hexosaminidase 1 (HEXO1).